The chain runs to 61 residues: Large ribosomal subunit protein uL30 (61 aa).

Belongs to the universal ribosomal protein uL30 family. In terms of assembly, part of the 50S ribosomal subunit.

The polypeptide is Large ribosomal subunit protein uL30 (Chromobacterium violaceum (strain ATCC 12472 / DSM 30191 / JCM 1249 / CCUG 213 / NBRC 12614 / NCIMB 9131 / NCTC 9757 / MK)).